We begin with the raw amino-acid sequence, 383 residues long: MPKLPPLSLYIHIPWCVQKCPYCDFNSHAQKSDIPEQDYIYHLLQDLQADLQRFKDSIQQRKLHSIFIGGGTPSLFSAESIAYLLKEIKKQIDFEDNIEITLEANPGTVEAERFKGYVSAGIMRISMGIQSFNDDKLQRLGRIHNAAEAKSAVNLAKVSGLKSFNLDLMHGLPNQTLEEALDDLRQAIELSPPHISWYQLTIEPNTMFAYRPPKLPDDDALWDIFEQGHQLLTMAGYQQYETSAYAKAGFQCKHNLNYWRFGDYLAIGCGAHGKLTFPTGEITRFSKTKHPKGYLRGEYLYEEKNVPKIDRPFEFFMNRFRLLEAVPKQEFEDYTGLSQSAVKNQIDFAIQQNYIVENADSWQITEHGKLFLNELLELFLTEE.

A Radical SAM core domain is found at 1-241 (MPKLPPLSLY…LTMAGYQQYE (241 aa)). Tyrosine 10 serves as a coordination point for S-adenosyl-L-methionine. Positions 16, 20, and 23 each coordinate [4Fe-4S] cluster. S-adenosyl-L-methionine-binding positions include glycine 70, 71-72 (GT), glutamate 103, glutamine 130, arginine 142, and aspartate 167.

The protein belongs to the anaerobic coproporphyrinogen-III oxidase family. HemW subfamily. [4Fe-4S] cluster serves as cofactor.

It localises to the cytoplasm. Probably acts as a heme chaperone, transferring heme to an unknown acceptor. Binds one molecule of heme per monomer, possibly covalently. Binds 1 [4Fe-4S] cluster. The cluster is coordinated with 3 cysteines and an exchangeable S-adenosyl-L-methionine. This Haemophilus influenzae (strain ATCC 51907 / DSM 11121 / KW20 / Rd) protein is Heme chaperone HemW.